The primary structure comprises 633 residues: Chaperone protein HtpG (633 aa).

Residues 1–341 form an a; substrate-binding region; the sequence is MTAPHETMSF…SADLPLNVSR (341 aa). Positions 342 to 562 are b; it reads ELLQESRDVK…EGDMSGYLQR (221 aa). The segment at 563–633 is c; the sequence is LLKQAGQKAP…YVQRVNKLLA (71 aa).

It belongs to the heat shock protein 90 family. As to quaternary structure, homodimer.

It is found in the cytoplasm. In terms of biological role, molecular chaperone. Has ATPase activity. This Cupriavidus necator (strain ATCC 17699 / DSM 428 / KCTC 22496 / NCIMB 10442 / H16 / Stanier 337) (Ralstonia eutropha) protein is Chaperone protein HtpG.